A 379-amino-acid polypeptide reads, in one-letter code: Cytochrome b (379 aa).

4 helical membrane-spanning segments follow: residues 33-53 (FGSL…FLAM), 77-98 (WLIR…FIHV), 113-133 (WNIG…GYVL), and 178-198 (FFAF…VHLL). Heme b is bound by residues His-83 and His-97. Heme b is bound by residues His-182 and His-196. His-201 is a binding site for a ubiquinone. The next 4 helical transmembrane spans lie at 226-246 (IKDL…ALFF), 288-308 (LGGV…PLLN), 320-340 (ITQT…WIGG), and 347-367 (FTTI…IIMP).

Belongs to the cytochrome b family. The cytochrome bc1 complex contains 11 subunits: 3 respiratory subunits (MT-CYB, CYC1 and UQCRFS1), 2 core proteins (UQCRC1 and UQCRC2) and 6 low-molecular weight proteins (UQCRH/QCR6, UQCRB/QCR7, UQCRQ/QCR8, UQCR10/QCR9, UQCR11/QCR10 and a cleavage product of UQCRFS1). This cytochrome bc1 complex then forms a dimer. Heme b is required as a cofactor.

Its subcellular location is the mitochondrion inner membrane. Its function is as follows. Component of the ubiquinol-cytochrome c reductase complex (complex III or cytochrome b-c1 complex) that is part of the mitochondrial respiratory chain. The b-c1 complex mediates electron transfer from ubiquinol to cytochrome c. Contributes to the generation of a proton gradient across the mitochondrial membrane that is then used for ATP synthesis. The polypeptide is Cytochrome b (MT-CYB) (Deltamys kempi (Kemp's grass mouse)).